We begin with the raw amino-acid sequence, 429 residues long: Ubiquinone hydroxylase UbiL (429 aa).

A disordered region spans residues 1–22; sequence MSEPLLRGLAAGDPPSATGPVT.

This sequence belongs to the UbiH/COQ6 family. Requires FAD as cofactor.

It catalyses the reaction a 2-(all-trans-polyprenyl)phenol + NADPH + O2 + H(+) = a 3-(all-trans-polyprenyl)benzene-1,2-diol + NADP(+) + H2O. Its pathway is cofactor biosynthesis; ubiquinone biosynthesis. In terms of biological role, catalyzes the hydroxylation of two positions of the aromatic ring during ubiquinone biosynthesis. The polypeptide is Ubiquinone hydroxylase UbiL (Rhodospirillum rubrum (strain ATCC 11170 / ATH 1.1.1 / DSM 467 / LMG 4362 / NCIMB 8255 / S1)).